The following is an 83-amino-acid chain: Subtilisin-chymotrypsin inhibitor CI-1A (83 aa).

The disordered stretch occupies residues 1–24 (MSSMEGSVLKYPEPTEGSIGASSA).

The protein belongs to the protease inhibitor I13 (potato type I serine protease inhibitor) family.

Inhibits both subtilisin and chymotrypsin. The polypeptide is Subtilisin-chymotrypsin inhibitor CI-1A (Hordeum vulgare (Barley)).